The following is a 380-amino-acid chain: Cytochrome b (380 aa).

4 consecutive transmembrane segments (helical) span residues 34 to 54, 78 to 99, 114 to 134, and 179 to 199; these read FGSLLGICLMTQILTGLLLAM, WLIRNLHANGASFFFICIYLHI, WNTGIILLLTLMATAFVGYVL, and FFALHFLLPFAIAGLTLIHLT. Residues His-84 and His-98 each coordinate heme b. Heme b-binding residues include His-183 and His-197. His-202 provides a ligand contact to a ubiquinone. 4 helical membrane-spanning segments follow: residues 227–247, 289–309, 321–341, and 348–368; these read LKDILGFTLMFLPLTSLALFS, LGGVLALAASVLILFLSPFLH, LSQLLFWILVTNLFILTWVGS, and FIIIGQLASITYFTILLILFP.

This sequence belongs to the cytochrome b family. The cytochrome bc1 complex contains 11 subunits: 3 respiratory subunits (MT-CYB, CYC1 and UQCRFS1), 2 core proteins (UQCRC1 and UQCRC2) and 6 low-molecular weight proteins (UQCRH/QCR6, UQCRB/QCR7, UQCRQ/QCR8, UQCR10/QCR9, UQCR11/QCR10 and a cleavage product of UQCRFS1). This cytochrome bc1 complex then forms a dimer. Heme b is required as a cofactor.

The protein resides in the mitochondrion inner membrane. Its function is as follows. Component of the ubiquinol-cytochrome c reductase complex (complex III or cytochrome b-c1 complex) that is part of the mitochondrial respiratory chain. The b-c1 complex mediates electron transfer from ubiquinol to cytochrome c. Contributes to the generation of a proton gradient across the mitochondrial membrane that is then used for ATP synthesis. The sequence is that of Cytochrome b (MT-CYB) from Daption capense (Cape petrel).